Here is a 614-residue protein sequence, read N- to C-terminus: MIQPLLVVTCLVVFPYQVSSIILESGNVNDYEVVYPQKVTSLPKGAVQQPEQKYEDTMQYEFKVNGEPVVLHLEKNKGLFSEDYSETHYSPDGREITTNPPVEDHCYYHGHIQNEADSTASISACNGLKGHFKLQGETYLIEPLKIPESEAHAVYKYENIEKEDEAPKMCGVTETNWESDEPIRKASQLVATSEQRRNIQKYIELVIVVDNVMFRKYTGNSTAIRTRIYEIVNTLNVVFRNVHIFVALVGIEIWNKKDQIKVKSAESVTLDLFGDWREKDLLRRKRHDNAQLLTGIDLNEQTLGIAPMSGMCKPKSSVGLIQDYCKSYLLVAIVMAHELGHNLGMDHDDGNCICREMPCIMSPEAGSKPAFYFSDCSWNQYQKFRNDIKSKCIDNKPLKTDIVSPAFCGNYFVEEGEECDCGFPGNCRNPCCNATTCKLTPGSECGDGECCDQCRIQTAGTECRPAWDECDVPEYCTGQSAECPTDVLQRNGQPCKNNNGYCYNGVCPILTNQCISLFGSSVTVAPDRCFNNNLQGTENFHCGMENGRYIKCKPQDKKCGRLFCVEPPTGGGINCKSIRSEGDPDHGMVDLGTKCADGKVCNSNRQCVDVNTAY.

Positions 1 to 20 (MIQPLLVVTCLVVFPYQVSS) are cleaved as a signal peptide. Positions 21–193 (IILESGNVND…RKASQLVATS (173 aa)) are excised as a propeptide. Pyrrolidone carboxylic acid (Glu) is present on glutamate 194. The 197-residue stretch at 201–397 (KYIELVIVVD…IKSKCIDNKP (197 aa)) folds into the Peptidase M12B domain. Asparagine 220 is a glycosylation site (N-linked (GlcNAc...) asparagine). Intrachain disulfides connect cysteine 312/cysteine 392, cysteine 352/cysteine 376, cysteine 354/cysteine 359, cysteine 408/cysteine 437, cysteine 419/cysteine 432, cysteine 421/cysteine 427, cysteine 431/cysteine 454, cysteine 445/cysteine 451, cysteine 450/cysteine 476, cysteine 463/cysteine 483, cysteine 470/cysteine 502, cysteine 495/cysteine 507, cysteine 514/cysteine 564, cysteine 529/cysteine 575, cysteine 542/cysteine 552, cysteine 559/cysteine 601, and cysteine 595/cysteine 607. Histidine 337 serves as a coordination point for Zn(2+). The Metal-binding motif lies at 337 to 348 (HELGHNLGMDHD). Glutamate 338 acts as the Proton acceptor in catalysis. Zn(2+)-binding residues include histidine 341 and histidine 347. Residues 405–491 (PAFCGNYFVE…ECPTDVLQRN (87 aa)) enclose the Disintegrin domain. Residues asparagine 410, phenylalanine 412, glutamate 414, glutamate 417, and aspartate 420 each coordinate Ca(2+). Asparagine 433 carries an N-linked (GlcNAc...) asparagine glycan. The D/ECD-tripeptide motif lies at 469 to 471 (ECD). Residues aspartate 471 and aspartate 486 each coordinate Ca(2+).

Belongs to the venom metalloproteinase (M12B) family. P-III subfamily. In terms of assembly, homodimer; disulfide-linked. Heterodimer of A and B subunits; disulfide-linked. Zn(2+) serves as cofactor. N-glycosylated. In terms of processing, the N-terminus is blocked. Expressed by the venom gland (at protein level). Expressed by the venom gland.

The protein localises to the secreted. With respect to regulation, the proteolytic activity of the heterodimer of A and B subunits requires Zn(2+) and Ca(2+) ions. Functionally, heterodimer (A and B subunits): Zinc metalloprotease that has fibrinogenolytic and hemorrhagic activities. Cleaves insulin B chain preferably at '40-Tyr-|-Leu-41' bond, but also at '28-Gln-|-His-29' and '34-His-|-Leu-35' bonds. Hydrolyzes effectively isolated extracellular matrix (ECM) bovine fibronectin, and only slightly, basal membrane (BM) proteins human collagen IV and murine laminin, in vitro. Cleaves nidogen-1 (at '350-Ser-|-Phe-351' and '380-Tyr-|-Asn-381' bonds), but not laminin, in a solubilized BM preparation. Hydrolyzes plasma proteins involved in blood coagulation in vitro. It slightly shortens prothrombin time and significantly prolongs thrombin time. Has potent alpha-fibrinogenase activity cleaving human fibrinogen alpha chain at '441-Glu-|-Leu-442' and '539-Glu-|-Phe-540' bonds, and to a lesser extent, beta chain at '52-Lys-|-Arg-53' and '48-Pro-|-Leu-49' bonds, but does not cleave gamma chain. Hydrolyzes bovine prothrombin at '200-Ser-|-Gly-201' bond, but does not activate it, however, it cleaves fragment 1 and prethrombin 1 from it. Hydrolyzes bovine factor X heavy chain, but the cleavage does not produce an activated factor Xa heavy chain. No hydrolysis or activation of plasminogen. The ability to degrade some of the ECM, BM and plasma proteins is likely the main contributor to its hemorrhagic activity. Inhibits platelet aggregation induced by collagen in vitro. Its binding to glycosaminoglycans (GAGs) may assist in concentrating it in the proximity of blood vessel walls enabling in vivo degradation of BM protein components. Cytotoxic to cultured HeLa cancer cells in a concentration- and time-dependent manner. In the solubilized BM preparation (Matrigel), it induces morphological changes in the HeLa cells and inhibits their adhesion, however, the viability of the cells is not reduced. This chain is Zinc metalloproteinase-disintegrin-like protein H4 subunit A, found in Vipera ammodytes ammodytes (Western sand viper).